A 300-amino-acid chain; its full sequence is Cation-efflux pump FieF (300 aa).

Residues 24–44 form a helical membrane-spanning segment; sequence LLIKIFAWWYTGSVSILAALV. The Zn(2+) site is built by Asp-45 and Asp-49. Helical transmembrane passes span 82–102 and 114–134; these read AALA…LTGI and AGVG…LVTF. His-153 and Asp-157 together coordinate Zn(2+). 2 helical membrane passes run 156 to 176 and 178 to 198; these read SDVM…YGWH and ADAL…LRMG.

This sequence belongs to the cation diffusion facilitator (CDF) transporter (TC 2.A.4) family. FieF subfamily. In terms of assembly, homodimer.

The protein resides in the cell inner membrane. The catalysed reaction is Zn(2+)(in) + H(+)(out) = Zn(2+)(out) + H(+)(in). The enzyme catalyses Cd(2+)(in) + H(+)(out) = Cd(2+)(out) + H(+)(in). It carries out the reaction Fe(2+)(in) + H(+)(out) = Fe(2+)(out) + H(+)(in). Divalent metal cation transporter which exports Zn(2+), Cd(2+) and possibly Fe(2+). May be involved in zinc and iron detoxification by efflux. This Klebsiella pneumoniae (strain 342) protein is Cation-efflux pump FieF.